The sequence spans 165 residues: Neurotrophin-3 (165 aa).

A signal peptide spans 1 to 3 (IQS). The propeptide occupies 4-119 (TSMDQGSLSE…VLNRTSRRKR (116 aa)). Residues 32–61 (KVPKQAARTKDGTQTTAKKTEAEPEATANK) are disordered. Asn-112 carries N-linked (GlcNAc...) asparagine glycosylation.

The protein belongs to the NGF-beta family.

It localises to the secreted. In terms of biological role, seems to promote the survival of visceral and proprioceptive sensory neurons. This is Neurotrophin-3 (NTF3) from Xenopeltis unicolor (Sunbeam snake).